Reading from the N-terminus, the 60-residue chain is Cecropin-B type 2 (60 aa).

An N-terminal signal peptide occupies residues 1–24; the sequence is MNFSKLFALVLLIGLVLLTGQTEA. The residue at position 58 (I58) is an Isoleucine amide.

This sequence belongs to the cecropin family.

It is found in the secreted. Its function is as follows. Cecropins have lytic and antibacterial activity against several Gram-positive and Gram-negative bacteria. In Aedes albopictus (Asian tiger mosquito), this protein is Cecropin-B type 2 (CECB2).